The chain runs to 105 residues: Integration host factor subunit beta (105 aa).

It belongs to the bacterial histone-like protein family. Heterodimer of an alpha and a beta chain.

In terms of biological role, this protein is one of the two subunits of integration host factor, a specific DNA-binding protein that functions in genetic recombination as well as in transcriptional and translational control. In Nitrosomonas europaea (strain ATCC 19718 / CIP 103999 / KCTC 2705 / NBRC 14298), this protein is Integration host factor subunit beta.